The chain runs to 262 residues: Proteasome subunit alpha (262 aa).

The segment at Leu-235–Ala-262 is disordered.

The protein belongs to the peptidase T1A family. In terms of assembly, the 20S proteasome core is composed of 14 alpha and 14 beta subunits that assemble into four stacked heptameric rings, resulting in a barrel-shaped structure. The two inner rings, each composed of seven catalytic beta subunits, are sandwiched by two outer rings, each composed of seven alpha subunits. The catalytic chamber with the active sites is on the inside of the barrel. Has a gated structure, the ends of the cylinder being occluded by the N-termini of the alpha-subunits. Is capped by the proteasome-associated ATPase, ARC.

It localises to the cytoplasm. It participates in protein degradation; proteasomal Pup-dependent pathway. Its activity is regulated as follows. The formation of the proteasomal ATPase ARC-20S proteasome complex, likely via the docking of the C-termini of ARC into the intersubunit pockets in the alpha-rings, may trigger opening of the gate for substrate entry. Interconversion between the open-gate and close-gate conformations leads to a dynamic regulation of the 20S proteasome proteolysis activity. Component of the proteasome core, a large protease complex with broad specificity involved in protein degradation. The protein is Proteasome subunit alpha of Gordonia bronchialis (strain ATCC 25592 / DSM 43247 / BCRC 13721 / JCM 3198 / KCTC 3076 / NBRC 16047 / NCTC 10667) (Rhodococcus bronchialis).